The primary structure comprises 179 residues: FADH(2)-dependent resorcinol hydroxylase, reductase component (179 aa).

The protein belongs to the non-flavoprotein flavin reductase family. As to quaternary structure, the FADH(2)-dependent resorcinol hydroxylase is composed of two subunits, GraA (the oxygenase component) and GraD (the reductase component). Both subunits are required for activity.

It carries out the reaction FADH2 + NAD(+) = FAD + NADH + 2 H(+). It participates in aromatic compound metabolism. Involved in the gamma-resorcylate (2,6-dihydroxybenzoate) catabolism. Reductase component of the resorcinol hydroxylase, which catalyzes the FADPH-dependent conversion of resorcinol to hydroxyquinol. Catalyzes the reduction of FAD by NADH. The reduced flavin is then transferred to the oxygenase component GraA. This is FADH(2)-dependent resorcinol hydroxylase, reductase component from Rhizobium sp. (strain MTP-10005).